A 67-amino-acid chain; its full sequence is Cell division protein ZapB (67 aa).

Positions 3–59 form a coiled coil; the sequence is LELLSKLETKIQTALETIELLKMELEEEKQKSIGLAEQNQQLSQDLNSWNEKVTGLV.

Belongs to the ZapB family. Homodimer. The ends of the coiled-coil dimer bind to each other, forming polymers. Interacts with FtsZ.

Its subcellular location is the cytoplasm. Its function is as follows. Non-essential, abundant cell division factor that is required for proper Z-ring formation. It is recruited early to the divisome by direct interaction with FtsZ, stimulating Z-ring assembly and thereby promoting cell division earlier in the cell cycle. Its recruitment to the Z-ring requires functional FtsA or ZipA. The protein is Cell division protein ZapB of Shewanella woodyi (strain ATCC 51908 / MS32).